The sequence spans 232 residues: Ribose-5-phosphate isomerase A (232 aa).

Residues T31–T34, D88–D91, and K101–G104 each bind substrate. E110 serves as the catalytic Proton acceptor. K128 serves as a coordination point for substrate.

The protein belongs to the ribose 5-phosphate isomerase family. Homodimer.

It carries out the reaction aldehydo-D-ribose 5-phosphate = D-ribulose 5-phosphate. It participates in carbohydrate degradation; pentose phosphate pathway; D-ribose 5-phosphate from D-ribulose 5-phosphate (non-oxidative stage): step 1/1. Catalyzes the reversible conversion of ribose-5-phosphate to ribulose 5-phosphate. This chain is Ribose-5-phosphate isomerase A, found in Lactobacillus johnsonii (strain CNCM I-12250 / La1 / NCC 533).